The sequence spans 256 residues: MLLIDKTVIVTGASRGIGRAAARECARQGARVVIGHSGSDEGRAGALSLAEEIAAFGGTAIAVGADAADLDSGEKLVAAAVEAFGSVDVLVNNAGICPFHSFLDMPRELYLKTVGTNLNGAYFTVQAAARRMKEQGRGGAIIAVSSISALVGGAMQTHYTPTKAGLLSLMQSCAIALGPYGIRCNAVLPGTIATDINKEDLSDLEKRERMTSRVPLGRLGEPDDLAGPIVFLASDMARYVTGASLLVDGGLFVNLQ.

Gly-12, Ser-14, Arg-15, Ile-17, Ser-37, Asp-66, Ala-67, and Asn-93 together coordinate NADP(+). Ser-146 acts as the Proton donor in catalysis. Beta-L-rhamnose contacts are provided by Ser-146, Ser-148, Gln-156, and Tyr-159. The NADP(+) site is built by Tyr-159 and Lys-163. Tyr-159 functions as the Proton acceptor in the catalytic mechanism. Lys-163 serves as the catalytic Lowers pKa of active site Tyr. Thr-191 is a beta-L-rhamnose binding site. Ile-192 contributes to the NADP(+) binding site. Residue Asn-197 participates in beta-L-rhamnose binding.

This sequence belongs to the short-chain dehydrogenases/reductases (SDR) family.

The enzyme catalyses L-rhamnofuranose + NAD(+) = L-rhamnono-1,4-lactone + NADH + H(+). The catalysed reaction is L-rhamnofuranose + NADP(+) = L-rhamnono-1,4-lactone + NADPH + H(+). It participates in carbohydrate degradation; L-rhamnose degradation. NAD(P)-dependent dehydrogenase that catalyzes the oxidation of L-rhamnose to L-rhamnono-1,4-lactone. Also shows high activity with L-lyxose and low activity with L-mannose and L-fucose. Can utilize either NAD(+) or NADP(+), with a strong preference for NADP(+). Catalyzes the first step in an alternative pathway for rhamnose utilization that does not involve phosphorylated intermediates. In Azotobacter vinelandii (strain DJ / ATCC BAA-1303), this protein is L-rhamnose 1-dehydrogenase (NAD(P)(+)).